The following is a 101-amino-acid chain: MAKKSSVEKNKHRAQLVKQYAGRRARLKAIANDETLSMEERFEARLKLAELPRNSAPVRLRNRCEISGRPRAFTRKMKMSRIAVRELGSQGLIPGLVKSSW.

The protein belongs to the universal ribosomal protein uS14 family. In terms of assembly, part of the 30S ribosomal subunit. Contacts proteins S3 and S10.

Binds 16S rRNA, required for the assembly of 30S particles and may also be responsible for determining the conformation of the 16S rRNA at the A site. The chain is Small ribosomal subunit protein uS14 from Beijerinckia indica subsp. indica (strain ATCC 9039 / DSM 1715 / NCIMB 8712).